Here is a 623-residue protein sequence, read N- to C-terminus: Glutathione import ATP-binding protein GsiA (623 aa).

ABC transporter domains follow at residues 15–269 (VSGL…QTLL) and 325–564 (LRSG…RKLM). ATP is bound by residues 49 to 56 (GESGSGKS) and 357 to 364 (GESGSGKS).

Belongs to the ABC transporter superfamily. Glutathione importer (TC 3.A.1.5.11) family. In terms of assembly, the complex is composed of two ATP-binding proteins (GsiA), two transmembrane proteins (GsiC and GsiD) and a solute-binding protein (GsiB).

It localises to the cell inner membrane. It catalyses the reaction glutathione(out) + ATP + H2O = glutathione(in) + ADP + phosphate + H(+). Functionally, part of the ABC transporter complex GsiABCD involved in glutathione import. Responsible for energy coupling to the transport system. The protein is Glutathione import ATP-binding protein GsiA of Salmonella choleraesuis (strain SC-B67).